The chain runs to 471 residues: Adenosylhomocysteinase (471 aa).

Residues T60, D135, and E196 each coordinate substrate. 197–199 (TTT) provides a ligand contact to NAD(+). Residues K226 and D230 each contribute to the substrate site. NAD(+) is bound by residues N231, 260 to 265 (GYGDVG), E283, N318, 339 to 341 (IGH), and N387.

This sequence belongs to the adenosylhomocysteinase family. Requires NAD(+) as cofactor.

The protein localises to the cytoplasm. It carries out the reaction S-adenosyl-L-homocysteine + H2O = L-homocysteine + adenosine. It participates in amino-acid biosynthesis; L-homocysteine biosynthesis; L-homocysteine from S-adenosyl-L-homocysteine: step 1/1. In terms of biological role, may play a key role in the regulation of the intracellular concentration of adenosylhomocysteine. The chain is Adenosylhomocysteinase from Chlorobium limicola (strain DSM 245 / NBRC 103803 / 6330).